A 131-amino-acid chain; its full sequence is MSMQDPIADMLTRIRNGQAANKVSVKMPSAKLKVAIAKLLKDEGYITDYAVASEGNKAELEVTLKYFQGRPVVETIQRVSRPGLRIYKGKDELPKVMGGLGIAIVSTSKGLMTDRAARLAGMGGEVICYVA.

The protein belongs to the universal ribosomal protein uS8 family. In terms of assembly, part of the 30S ribosomal subunit. Contacts proteins S5 and S12.

Functionally, one of the primary rRNA binding proteins, it binds directly to 16S rRNA central domain where it helps coordinate assembly of the platform of the 30S subunit. The chain is Small ribosomal subunit protein uS8 from Shewanella amazonensis (strain ATCC BAA-1098 / SB2B).